A 126-amino-acid polypeptide reads, in one-letter code: Small ribosomal subunit protein uS13 (126 aa).

Positions 98–126 (PVRGQSTKNNARTRKGRKKTVANKKKATK) are disordered. Over residues 108 to 126 (ARTRKGRKKTVANKKKATK) the composition is skewed to basic residues.

It belongs to the universal ribosomal protein uS13 family. As to quaternary structure, part of the 30S ribosomal subunit. Forms a loose heterodimer with protein S19. Forms two bridges to the 50S subunit in the 70S ribosome.

Functionally, located at the top of the head of the 30S subunit, it contacts several helices of the 16S rRNA. In the 70S ribosome it contacts the 23S rRNA (bridge B1a) and protein L5 of the 50S subunit (bridge B1b), connecting the 2 subunits; these bridges are implicated in subunit movement. Contacts the tRNAs in the A and P-sites. This chain is Small ribosomal subunit protein uS13, found in Bacteroides fragilis (strain ATCC 25285 / DSM 2151 / CCUG 4856 / JCM 11019 / LMG 10263 / NCTC 9343 / Onslow / VPI 2553 / EN-2).